A 379-amino-acid chain; its full sequence is Homoserine O-acetyltransferase (379 aa).

Residues N52 to E356 enclose the AB hydrolase-1 domain. The Nucleophile role is filled by S157. R227 is a substrate binding site. Catalysis depends on residues D320 and H350. A substrate-binding site is contributed by D351.

This sequence belongs to the AB hydrolase superfamily. MetX family. In terms of assembly, homodimer.

The protein localises to the cytoplasm. It carries out the reaction L-homoserine + acetyl-CoA = O-acetyl-L-homoserine + CoA. The protein operates within amino-acid biosynthesis; L-methionine biosynthesis via de novo pathway; O-acetyl-L-homoserine from L-homoserine: step 1/1. Functionally, transfers an acetyl group from acetyl-CoA to L-homoserine, forming acetyl-L-homoserine. In Mycobacterium ulcerans (strain Agy99), this protein is Homoserine O-acetyltransferase.